The chain runs to 384 residues: Calreticulin-3 (384 aa).

The first 19 residues, 1–19, serve as a signal peptide directing secretion; sequence MAAARVPLWAICVRRVALA. An N-domain region spans residues 20–197; sequence TVYFQEEFLD…GQSIESGSIE (178 aa). An N-linked (GlcNAc...) asparagine glycan is attached at N42. An intrachain disulfide couples C105 to C137. Positions 109, 111, 128, and 135 each coordinate an alpha-D-glucoside. 7 consecutive repeat copies span residues 191–202, 209–220, 222–231, 235–246, 250–260, 264–272, and 274–284. Positions 191–246 are 4 X approximate repeats; the sequence is IESGSIEYDWQLTSLKKMEKASAEAEGWDQAAKDKSQDWEKHFLDASASKPSDWKG. The P-domain stretch occupies residues 198–294; it reads YDWQLTSLKK…YLTEYDLSEF (97 aa). Residues 250 to 284 are 3 X approximate repeats; it reads GDWQAAMLQKPPYQDGLKPEGIDKDVWLHQKMKNS. The tract at residues 295-384 is C-domain; sequence ENIGAVGLEL…FKGFHRRNEF (90 aa). E303 contributes to the an alpha-D-glucoside binding site. A Prevents secretion from ER motif is present at residues 381-384; that stretch reads RNEF.

The protein belongs to the calreticulin family. As to quaternary structure, component of an EIF2 complex at least composed of CELF1/CUGBP1, CALR, CALR3, EIF2S1, EIF2S2, HSP90B1 and HSPA5.

The protein localises to the endoplasmic reticulum lumen. During spermatogenesis, may act as a lectin-independent chaperone for specific client proteins such as ADAM3. CALR3 capacity for calcium-binding may be absent or much lower than that of CALR. Required for sperm fertility. This is Calreticulin-3 (CALR3) from Bos taurus (Bovine).